The following is a 92-amino-acid chain: Small ribosomal subunit protein uS19 (92 aa).

This sequence belongs to the universal ribosomal protein uS19 family.

Protein S19 forms a complex with S13 that binds strongly to the 16S ribosomal RNA. The polypeptide is Small ribosomal subunit protein uS19 (Granulibacter bethesdensis (strain ATCC BAA-1260 / CGDNIH1)).